Here is a 250-residue protein sequence, read N- to C-terminus: Small ribosomal subunit protein uS2 (250 aa).

It belongs to the universal ribosomal protein uS2 family.

This chain is Small ribosomal subunit protein uS2, found in Paraburkholderia xenovorans (strain LB400).